The chain runs to 149 residues: Arginine repressor (149 aa).

Belongs to the ArgR family.

Its subcellular location is the cytoplasm. It participates in amino-acid biosynthesis; L-arginine biosynthesis [regulation]. In terms of biological role, regulates arginine biosynthesis genes. The sequence is that of Arginine repressor from Geobacillus sp. (strain WCH70).